A 213-amino-acid chain; its full sequence is Peptidyl-tRNA hydrolase (213 aa).

Y15 serves as a coordination point for tRNA. The Proton acceptor role is filled by H20. TRNA is bound by residues Y66, N68, and N114. The segment at 186-213 (MHAKPPRPKPPRPVTAPGAPVPPTEPSA) is disordered. The segment covering 196 to 213 (PRPVTAPGAPVPPTEPSA) has biased composition (pro residues).

The protein belongs to the PTH family. In terms of assembly, monomer.

The protein localises to the cytoplasm. The catalysed reaction is an N-acyl-L-alpha-aminoacyl-tRNA + H2O = an N-acyl-L-amino acid + a tRNA + H(+). Hydrolyzes ribosome-free peptidyl-tRNAs (with 1 or more amino acids incorporated), which drop off the ribosome during protein synthesis, or as a result of ribosome stalling. Functionally, catalyzes the release of premature peptidyl moieties from peptidyl-tRNA molecules trapped in stalled 50S ribosomal subunits, and thus maintains levels of free tRNAs and 50S ribosomes. In Leptothrix cholodnii (strain ATCC 51168 / LMG 8142 / SP-6) (Leptothrix discophora (strain SP-6)), this protein is Peptidyl-tRNA hydrolase.